The sequence spans 82 residues: Cytochrome b559 subunit alpha (82 aa).

A helical membrane pass occupies residues 22-36 (IIHAVTLPAIFIAGF). Residue His-24 participates in heme binding.

The protein belongs to the PsbE/PsbF family. As to quaternary structure, heterodimer of an alpha subunit and a beta subunit. PSII is composed of 1 copy each of membrane proteins PsbA, PsbB, PsbC, PsbD, PsbE, PsbF, PsbH, PsbI, PsbJ, PsbK, PsbL, PsbM, PsbT, PsbX, PsbY, Psb30/Ycf12, peripheral proteins PsbO, CyanoQ (PsbQ), PsbU, PsbV and a large number of cofactors. It forms dimeric complexes. Requires heme b as cofactor.

It localises to the cellular thylakoid membrane. Functionally, this b-type cytochrome is tightly associated with the reaction center of photosystem II (PSII). PSII is a light-driven water:plastoquinone oxidoreductase that uses light energy to abstract electrons from H(2)O, generating O(2) and a proton gradient subsequently used for ATP formation. It consists of a core antenna complex that captures photons, and an electron transfer chain that converts photonic excitation into a charge separation. This Prochlorococcus marinus (strain MIT 9211) protein is Cytochrome b559 subunit alpha.